Consider the following 317-residue polypeptide: Serpentine receptor class delta-46 (317 aa).

A run of 7 helical transmembrane segments spans residues 9-29 (FYII…YVII), 42-62 (IFLC…LLQA), 91-111 (YVLC…TMYV), 129-149 (VIIL…YLTI), 185-205 (QIVF…MFCL), 239-259 (AFLP…ALIT), and 269-289 (FVSV…FYTV).

It belongs to the nematode receptor-like protein srd family.

Its subcellular location is the membrane. The polypeptide is Serpentine receptor class delta-46 (srd-46) (Caenorhabditis elegans).